A 364-amino-acid polypeptide reads, in one-letter code: Thebaine 6-O-demethylase (364 aa).

The 101-residue stretch at 214–314 (GTQAMRMNYY…RLSIATFHDP (101 aa)) folds into the Fe2OG dioxygenase domain. 2-oxoglutarate is bound at residue Tyr223. The Fe cation site is built by His238, Asp240, and His295. 2-oxoglutarate contacts are provided by Arg305 and Ser307.

Belongs to the iron/ascorbate-dependent oxidoreductase family. It depends on L-ascorbate as a cofactor. Requires Fe cation as cofactor. As to expression, mainly expressed in stems and leaves and, to a lower extent, in capsules and roots.

The enzyme catalyses thebaine + 2-oxoglutarate + O2 = neopinone + formaldehyde + succinate + CO2. It carries out the reaction oripavine + 2-oxoglutarate + O2 = neomorphinone + formaldehyde + succinate + CO2. The catalysed reaction is (S)-canadine + S-adenosyl-L-methionine = (S)-cis-N-methylcanadine + S-adenosyl-L-homocysteine. It catalyses the reaction thebaine + 2-oxoglutarate + O2 = 6-O-demethylthebaine + formaldehyde + succinate + CO2 + H(+). The protein operates within alkaloid biosynthesis; morphine biosynthesis. With respect to regulation, moderate substrate inhibition. Not inhibited in vitro by acylcyclohexanediones. Its function is as follows. Non-heme dioxygenase involved in biosynthesis of morphinan-type benzylisoquinoline and opiate alkaloids natural products. Mediates the conversion of thebaine to neopinone. Also catalyzes, with lower efficiency, the 6-O-demethylation of oripavine to neomorphinone, which is converted spontaneously to morphinone. Supports dealkylation reactions such as O,O-demethylenation in the metabolism of protopine, benzo[c]phenanthridine, and rhoeadine alkaloids; cleaves a methylenedioxy bridge leaving two hydroxyl groups. Catalyzes the O-demethylation of methylenedioxy bridges on protopine alkaloids such as allocryptopine. No activity with (S)-reticuline, salutaridine, papaverine, (S)-corytuberine, (S)-scoulerine, pavine, noscapine or codeine. The chain is Thebaine 6-O-demethylase from Papaver somniferum (Opium poppy).